Reading from the N-terminus, the 404-residue chain is Cysteine desulfurase IscS (404 aa).

Residues 73–74 (AT), N153, Q181, and 201–203 (SAH) contribute to the pyridoxal 5'-phosphate site. At K204 the chain carries N6-(pyridoxal phosphate)lysine. T241 is a binding site for pyridoxal 5'-phosphate. The active-site Cysteine persulfide intermediate is C327. C327 is a binding site for [2Fe-2S] cluster.

The protein belongs to the class-V pyridoxal-phosphate-dependent aminotransferase family. NifS/IscS subfamily. Homodimer. Forms a heterotetramer with IscU, interacts with other sulfur acceptors. Requires pyridoxal 5'-phosphate as cofactor.

It is found in the cytoplasm. The catalysed reaction is (sulfur carrier)-H + L-cysteine = (sulfur carrier)-SH + L-alanine. Its pathway is cofactor biosynthesis; iron-sulfur cluster biosynthesis. Functionally, master enzyme that delivers sulfur to a number of partners involved in Fe-S cluster assembly, tRNA modification or cofactor biosynthesis. Catalyzes the removal of elemental sulfur atoms from cysteine to produce alanine. Functions as a sulfur delivery protein for Fe-S cluster synthesis onto IscU, an Fe-S scaffold assembly protein, as well as other S acceptor proteins. The protein is Cysteine desulfurase IscS of Anaeromyxobacter sp. (strain Fw109-5).